The chain runs to 440 residues: Phenylacetate-coenzyme A ligase (440 aa).

This sequence belongs to the phenylacetyl-CoA ligase family. As to quaternary structure, monomer.

It carries out the reaction 2-phenylacetate + ATP + CoA = phenylacetyl-CoA + AMP + diphosphate. It participates in aromatic compound metabolism; phenylacetate degradation. Its activity is regulated as follows. Inhibition of activity is observed in the presence of a 1 mM of the divalent cations zinc, copper, and nickel. Catalyzes the activation of phenylacetic acid (PA) to phenylacetyl-CoA (PA-CoA). Involved in the phenylalanine metabolism. This is Phenylacetate-coenzyme A ligase (paaK) from Aromatoleum evansii (Azoarcus evansii).